A 301-amino-acid polypeptide reads, in one-letter code: Ribonuclease Z (301 aa).

The Zn(2+) site is built by histidine 63, histidine 65, aspartate 67, histidine 68, histidine 141, aspartate 204, and histidine 262. Residue aspartate 67 is the Proton acceptor of the active site.

This sequence belongs to the RNase Z family. As to quaternary structure, homodimer. The cofactor is Zn(2+).

It carries out the reaction Endonucleolytic cleavage of RNA, removing extra 3' nucleotides from tRNA precursor, generating 3' termini of tRNAs. A 3'-hydroxy group is left at the tRNA terminus and a 5'-phosphoryl group is left at the trailer molecule.. Zinc phosphodiesterase, which displays some tRNA 3'-processing endonuclease activity. Probably involved in tRNA maturation, by removing a 3'-trailer from precursor tRNA. This is Ribonuclease Z from Streptomyces coelicolor (strain ATCC BAA-471 / A3(2) / M145).